We begin with the raw amino-acid sequence, 31 residues long: Cytochrome b6-f complex subunit 6 (31 aa).

The chain crosses the membrane as a helical span at residues Ile4–Gly24.

It belongs to the PetL family. In terms of assembly, the 4 large subunits of the cytochrome b6-f complex are cytochrome b6, subunit IV (17 kDa polypeptide, PetD), cytochrome f and the Rieske protein, while the 4 small subunits are PetG, PetL, PetM and PetN. The complex functions as a dimer.

Its subcellular location is the plastid. It localises to the chloroplast thylakoid membrane. In terms of biological role, component of the cytochrome b6-f complex, which mediates electron transfer between photosystem II (PSII) and photosystem I (PSI), cyclic electron flow around PSI, and state transitions. PetL is important for photoautotrophic growth as well as for electron transfer efficiency and stability of the cytochrome b6-f complex. The chain is Cytochrome b6-f complex subunit 6 from Humulus lupulus (European hop).